We begin with the raw amino-acid sequence, 695 residues long: Phosphate acetyltransferase (695 aa).

The interval 374 to 695 (FRYQLIQRAQ…LTAIQASVAR (322 aa)) is phosphate acetyltransferase.

This sequence in the N-terminal section; belongs to the CobB/CobQ family. In the C-terminal section; belongs to the phosphate acetyltransferase and butyryltransferase family. Homohexamer.

It is found in the cytoplasm. The enzyme catalyses acetyl-CoA + phosphate = acetyl phosphate + CoA. The protein operates within metabolic intermediate biosynthesis; acetyl-CoA biosynthesis; acetyl-CoA from acetate: step 2/2. Involved in acetate metabolism. This Pseudomonas putida (strain ATCC 47054 / DSM 6125 / CFBP 8728 / NCIMB 11950 / KT2440) protein is Phosphate acetyltransferase (pta).